Reading from the N-terminus, the 181-residue chain is Adenine phosphoribosyltransferase (181 aa).

It belongs to the purine/pyrimidine phosphoribosyltransferase family. Homodimer.

It localises to the cytoplasm. It catalyses the reaction AMP + diphosphate = 5-phospho-alpha-D-ribose 1-diphosphate + adenine. It functions in the pathway purine metabolism; AMP biosynthesis via salvage pathway; AMP from adenine: step 1/1. Catalyzes a salvage reaction resulting in the formation of AMP, that is energically less costly than de novo synthesis. This is Adenine phosphoribosyltransferase from Acidobacterium capsulatum (strain ATCC 51196 / DSM 11244 / BCRC 80197 / JCM 7670 / NBRC 15755 / NCIMB 13165 / 161).